A 326-amino-acid polypeptide reads, in one-letter code: Probable cell division protein WhiA (326 aa).

Residues 275–308 (SLDELGHHADPPMTKDAVAGRIRRLLAMADKKAV) constitute a DNA-binding region (H-T-H motif).

The protein belongs to the WhiA family.

In terms of biological role, involved in cell division and chromosome segregation. The sequence is that of Probable cell division protein WhiA from Clavibacter sepedonicus (Clavibacter michiganensis subsp. sepedonicus).